The primary structure comprises 597 residues: Putative heat shock protein HSP 90-beta-3 (597 aa).

ATP contacts are provided by asparagine 46, aspartate 88, and lysine 107. Positions 201-241 (DKEISDDEAEEEKGEKEEEDKDDEEKPKIKDVGSDEEDDSK) are disordered. A compositionally biased stretch (acidic residues) spans 204 to 223 (ISDDEAEEEKGEKEEEDKDD). The segment covering 224–233 (EEKPKIKDVG) has biased composition (basic and acidic residues). An ATP-binding site is contributed by arginine 334. Residues 414-446 (LELPEDEEEKKKMEESKEKFENLCKLMKEILDK) are a coiled coil. A compositionally biased stretch (acidic residues) spans 564–578 (DEDEVAAEEPSDAVP). The segment at 564–597 (DEDEVAAEEPSDAVPDEIPPLEGDEDASRMEEVD) is disordered. Positions 593-597 (MEEVD) match the TPR repeat-binding motif.

It belongs to the heat shock protein 90 family. As to quaternary structure, homodimer.

Its subcellular location is the cytoplasm. Putative molecular chaperone that may promote the maturation, structural maintenance and proper regulation of specific target proteins. This Homo sapiens (Human) protein is Putative heat shock protein HSP 90-beta-3 (HSP90AB3P).